A 222-amino-acid chain; its full sequence is UPF0488 protein C8orf33 homolog (222 aa).

The span at 1-16 shows a compositional bias: low complexity; it reads MAEPGRPAREAPAASS. Disordered stretches follow at residues 1 to 103, 119 to 146, and 186 to 210; these read MAEP…AEQL, KTQRPTPKQKEQAVGAIRTLRSEKTPLP, and VSEATRKKSGRVCRPRPAERAKTTP. Ala-2 bears the N-acetylalanine mark. The span at 17–28 shows a compositional bias: basic residues; it reads RKTHRAPRRPRP. An Omega-N-methylarginine modification is found at Arg-27. A compositionally biased stretch (low complexity) spans 29–39; the sequence is SRSASGASEPP. Ser-75 is subject to Phosphoserine. The span at 93-103 shows a compositional bias: low complexity; sequence PPSAEAQAEQL.

It belongs to the UPF0488 family.

This chain is UPF0488 protein C8orf33 homolog, found in Mus musculus (Mouse).